We begin with the raw amino-acid sequence, 240 residues long: TATA-box-binding protein (240 aa).

Positions 21–61 are disordered; sequence NTRQVWENQNRDGTKPATTFQSEEDIKRAAPESEKDTSATS. The span at 44 to 57 shows a compositional bias: basic and acidic residues; it reads EDIKRAAPESEKDT. A run of 2 repeats spans residues 67–143 and 157–234.

The protein belongs to the TBP family. In terms of assembly, binds DNA as monomer. The 1.2 MDa TFIID complex is composed of TATA binding protein (TBP) and the 14 TBP-associated factors. One copy of each TAF1, TAF2, TAF3, TAF7, TAF8, TAF11, TAF13, two copies of each TAF4, TAF5, TAF6, TAF9, TAF10, TAF12, and three copies of TAF14. Interacts with TFC8.

The protein resides in the nucleus. In terms of biological role, general transcription factor that functions at the core of the DNA-binding general transcription factor complex TFIID. Binding of TFIID to a promoter (with or without TATA element) is the initial step in preinitiation complex (PIC) formation. TFIID plays a key role in the regulation of gene expression by RNA polymerase II through different activities such as transcription activator interaction, core promoter recognition and selectivity, TFIIA and TFIIB interaction, chromatin modification (histone acetylation by TAF1), facilitation of DNA opening and initiation of transcription. The chain is TATA-box-binding protein (SPT15) from Saccharomyces cerevisiae (strain ATCC 204508 / S288c) (Baker's yeast).